Reading from the N-terminus, the 539-residue chain is MESKRAIIAIALSFVVLVGWSYLADHMGWNGQPAPQAQQEETAPSASQAAPQSASQAAAPAPRAETPVFLPSAGREVTVVTPLYKAVLHSGGGVLKHFSLTRYRTAITAGAPAVDMVDTASTVMSPLGLLINGQPSWNTGQWSFDGGDLSLGAGQSGVLTFTGEVDGVRVVRELTFSADTYLISEKVRLAPLADARTVRLGFTVGTGNLSPNGGQYDHTRVAWLHDGSFSEKTSASDLEKGVLETGALSWGAVMSNYFLVAAAPVDTTGVTLKGKLQEGVYRVAMERGDVSIPAGGETTVACNYWFGPKDRGLLKEAPNQLAEAINLGWFSIIARPLVDMLEFFHKYVGNYGVAIILLTVVIKLVFWPLSHKSYKSMEQMKKLQPMLQKLREKHGDDREKMNEEMMRLYKTYKVNPAGGCLPMLVQIPVFFGLYQALLNAIELRHASFITHLPFTDMVWLADLSAKDPYYITPIVMGATMLLQQKLTPAPGDPTQAKIMMFMPVVFTFMFLSFPSGLVVYWLCNNVLSIAQQWWMLRKA.

A helical membrane pass occupies residues 7–27; sequence IIAIALSFVVLVGWSYLADHM. The segment at 32 to 64 is disordered; it reads QPAPQAQQEETAPSASQAAPQSASQAAAPAPRA. Helical transmembrane passes span 347–367, 418–438, and 498–518; these read YVGNYGVAIILLTVVIKLVFW, GGCLPMLVQIPVFFGLYQALL, and IMMFMPVVFTFMFLSFPSGLV.

Belongs to the OXA1/ALB3/YidC family. Type 1 subfamily. As to quaternary structure, interacts with the Sec translocase complex via SecD. Specifically interacts with transmembrane segments of nascent integral membrane proteins during membrane integration.

Its subcellular location is the cell inner membrane. In terms of biological role, required for the insertion and/or proper folding and/or complex formation of integral membrane proteins into the membrane. Involved in integration of membrane proteins that insert both dependently and independently of the Sec translocase complex, as well as at least some lipoproteins. Aids folding of multispanning membrane proteins. This Nitratidesulfovibrio vulgaris (strain DSM 19637 / Miyazaki F) (Desulfovibrio vulgaris) protein is Membrane protein insertase YidC.